The following is a 341-amino-acid chain: Methionine import ATP-binding protein MetN (341 aa).

Positions 2–237 (IELCGLKKSF…PESLARKMLY (236 aa)) constitute an ABC transporter domain. Residue 34-41 (GKSGAGKS) participates in ATP binding.

It belongs to the ABC transporter superfamily. Methionine importer (TC 3.A.1.24) family. The complex is composed of two ATP-binding proteins (MetN), two transmembrane proteins (MetI) and a solute-binding protein (MetQ).

The protein localises to the cell inner membrane. It carries out the reaction L-methionine(out) + ATP + H2O = L-methionine(in) + ADP + phosphate + H(+). The catalysed reaction is D-methionine(out) + ATP + H2O = D-methionine(in) + ADP + phosphate + H(+). In terms of biological role, part of the ABC transporter complex MetNIQ involved in methionine import. Responsible for energy coupling to the transport system. The chain is Methionine import ATP-binding protein MetN from Legionella pneumophila (strain Lens).